A 226-amino-acid polypeptide reads, in one-letter code: Ribosomal RNA small subunit methyltransferase Nep1 (226 aa).

Residues Gly-176, Gly-181, and 197–202 (IYEESL) each bind S-adenosyl-L-methionine.

This sequence belongs to the class IV-like SAM-binding methyltransferase superfamily. RNA methyltransferase NEP1 family. In terms of assembly, homodimer.

It carries out the reaction a pseudouridine in rRNA + S-adenosyl-L-methionine = an N(1)-methylpseudouridine in rRNA + S-adenosyl-L-homocysteine + H(+). Functionally, methyltransferase involved in ribosomal biogenesis. Specifically catalyzes the N1-methylation of the pseudouridine corresponding to position 914 in M.jannaschii 16S rRNA. The protein is Ribosomal RNA small subunit methyltransferase Nep1 of Methanothrix thermoacetophila (strain DSM 6194 / JCM 14653 / NBRC 101360 / PT) (Methanosaeta thermophila).